The sequence spans 246 residues: Putative F-box/LRR-repeat protein 9 (246 aa).

An F-box domain is found at 18-65; that stretch reads YRNWAELPPELTSSILLRLGAIEILQNAQRVCKSWRRVCQDPSMWRKI.

This chain is Putative F-box/LRR-repeat protein 9 (FBL9), found in Arabidopsis thaliana (Mouse-ear cress).